We begin with the raw amino-acid sequence, 447 residues long: Ribosomal protein uS12 methylthiotransferase RimO (447 aa).

The MTTase N-terminal domain maps to 4–114 (PKVGFVSLGC…VMEAVHEYVP (111 aa)). Residues cysteine 13, cysteine 49, cysteine 78, cysteine 147, cysteine 151, and cysteine 154 each contribute to the [4Fe-4S] cluster site. Residues 133 to 370 (LTPKHYAYLK…MQVQQQISAA (238 aa)) form the Radical SAM core domain. The 71-residue stretch at 373–443 (QKRIGQTMTV…EYDLFAKLIK (71 aa)) folds into the TRAM domain.

It belongs to the methylthiotransferase family. RimO subfamily. [4Fe-4S] cluster serves as cofactor.

Its subcellular location is the cytoplasm. It catalyses the reaction L-aspartate(89)-[ribosomal protein uS12]-hydrogen + (sulfur carrier)-SH + AH2 + 2 S-adenosyl-L-methionine = 3-methylsulfanyl-L-aspartate(89)-[ribosomal protein uS12]-hydrogen + (sulfur carrier)-H + 5'-deoxyadenosine + L-methionine + A + S-adenosyl-L-homocysteine + 2 H(+). Catalyzes the methylthiolation of an aspartic acid residue of ribosomal protein uS12. In Acinetobacter baumannii (strain AB0057), this protein is Ribosomal protein uS12 methylthiotransferase RimO.